Here is a 154-residue protein sequence, read N- to C-terminus: Ribonuclease 8 (154 aa).

The first 27 residues, 1–27 (MAPARAGCCPLLLLLLGLWVAEVLVRA), serve as a signal peptide directing secretion. Residue histidine 42 is the Proton acceptor of the active site. Disulfide bonds link cysteine 50-cysteine 93, cysteine 64-cysteine 118, cysteine 82-cysteine 133, and cysteine 89-cysteine 96. Substrate-binding positions include 65–69 (KDLNT) and lysine 90. Histidine 149 serves as the catalytic Proton donor.

Belongs to the pancreatic ribonuclease family. Expressed prominently in the placenta and is not detected in any other tissues examined.

It localises to the secreted. In terms of biological role, has a low ribonuclease activity. In Homo sapiens (Human), this protein is Ribonuclease 8 (RNASE8).